We begin with the raw amino-acid sequence, 187 residues long: Interferon alpha-1/2 (187 aa).

Positions 1–23 are cleaved as a signal peptide; that stretch reads MALPCSFSVALVLLSCHSLCCLA. 2 disulfide bridges follow: cysteine 24-cysteine 122 and cysteine 52-cysteine 160. Asparagine 101 carries an N-linked (GlcNAc...) asparagine glycan.

The protein belongs to the alpha/beta interferon family.

Its subcellular location is the secreted. In terms of biological role, produced by macrophages, IFN-alpha have antiviral activities. Interferon stimulates the production of two enzymes: a protein kinase and an oligoadenylate synthetase. The chain is Interferon alpha-1/2 from Canis lupus familiaris (Dog).